The following is a 231-amino-acid chain: ATP phosphoribosyltransferase (231 aa).

It belongs to the ATP phosphoribosyltransferase family. Short subfamily. In terms of assembly, heteromultimer composed of HisG and HisZ subunits.

The protein localises to the cytoplasm. The enzyme catalyses 1-(5-phospho-beta-D-ribosyl)-ATP + diphosphate = 5-phospho-alpha-D-ribose 1-diphosphate + ATP. Its pathway is amino-acid biosynthesis; L-histidine biosynthesis; L-histidine from 5-phospho-alpha-D-ribose 1-diphosphate: step 1/9. In terms of biological role, catalyzes the condensation of ATP and 5-phosphoribose 1-diphosphate to form N'-(5'-phosphoribosyl)-ATP (PR-ATP). Has a crucial role in the pathway because the rate of histidine biosynthesis seems to be controlled primarily by regulation of HisG enzymatic activity. The sequence is that of ATP phosphoribosyltransferase (hisG) from Rhizobium etli (strain CIAT 652).